The chain runs to 438 residues: Adenylosuccinate synthetase (438 aa).

GTP-binding positions include 12 to 18 (GDEGKGK) and 40 to 42 (GHT). The active-site Proton acceptor is the Asp-13. Asp-13 and Gly-40 together coordinate Mg(2+). Residues 13–16 (DEGK), 38–41 (NAGH), Thr-128, Arg-142, Gln-223, Thr-238, and Arg-302 contribute to the IMP site. His-41 acts as the Proton donor in catalysis. Position 298–304 (298–304 (TTTGRPR)) interacts with substrate. Residues Arg-304, 330 to 332 (KLD), and 412 to 414 (GVG) contribute to the GTP site.

It belongs to the adenylosuccinate synthetase family. In terms of assembly, homodimer. The cofactor is Mg(2+).

It is found in the cytoplasm. The enzyme catalyses IMP + L-aspartate + GTP = N(6)-(1,2-dicarboxyethyl)-AMP + GDP + phosphate + 2 H(+). It functions in the pathway purine metabolism; AMP biosynthesis via de novo pathway; AMP from IMP: step 1/2. In terms of biological role, plays an important role in the de novo pathway of purine nucleotide biosynthesis. Catalyzes the first committed step in the biosynthesis of AMP from IMP. The protein is Adenylosuccinate synthetase of Leifsonia xyli subsp. xyli (strain CTCB07).